We begin with the raw amino-acid sequence, 380 residues long: Queuine tRNA-ribosyltransferase (380 aa).

Aspartate 96 serves as the catalytic Proton acceptor. Residues 96 to 100 (DSGGF), aspartate 150, glutamine 193, and glycine 220 each bind substrate. The RNA binding stretch occupies residues 251-257 (GVGAPDS). Residue aspartate 270 is the Nucleophile of the active site. Positions 275-279 (TRIAR) are RNA binding; important for wobble base 34 recognition. Positions 308, 310, 313, and 339 each coordinate Zn(2+).

It belongs to the queuine tRNA-ribosyltransferase family. As to quaternary structure, homodimer. Within each dimer, one monomer is responsible for RNA recognition and catalysis, while the other monomer binds to the replacement base PreQ1. Requires Zn(2+) as cofactor.

The catalysed reaction is 7-aminomethyl-7-carbaguanine + guanosine(34) in tRNA = 7-aminomethyl-7-carbaguanosine(34) in tRNA + guanine. The protein operates within tRNA modification; tRNA-queuosine biosynthesis. In terms of biological role, catalyzes the base-exchange of a guanine (G) residue with the queuine precursor 7-aminomethyl-7-deazaguanine (PreQ1) at position 34 (anticodon wobble position) in tRNAs with GU(N) anticodons (tRNA-Asp, -Asn, -His and -Tyr). Catalysis occurs through a double-displacement mechanism. The nucleophile active site attacks the C1' of nucleotide 34 to detach the guanine base from the RNA, forming a covalent enzyme-RNA intermediate. The proton acceptor active site deprotonates the incoming PreQ1, allowing a nucleophilic attack on the C1' of the ribose to form the product. After dissociation, two additional enzymatic reactions on the tRNA convert PreQ1 to queuine (Q), resulting in the hypermodified nucleoside queuosine (7-(((4,5-cis-dihydroxy-2-cyclopenten-1-yl)amino)methyl)-7-deazaguanosine). The sequence is that of Queuine tRNA-ribosyltransferase from Streptococcus thermophilus (strain ATCC BAA-250 / LMG 18311).